A 317-amino-acid chain; its full sequence is Thiamine thiazole synthase (317 aa).

Substrate is bound by residues C78, 99–100 (EA), G107, and V172. C206 is subject to 2,3-didehydroalanine (Cys). Substrate contacts are provided by residues D208, H223, M275, and 285–287 (RMG).

The protein belongs to the THI4 family. As to quaternary structure, homooctamer. Fe cation is required as a cofactor. Post-translationally, during the catalytic reaction, a sulfide is transferred from Cys-206 to a reaction intermediate, generating a dehydroalanine residue.

Its subcellular location is the cytoplasm. It localises to the nucleus. It catalyses the reaction [ADP-thiazole synthase]-L-cysteine + glycine + NAD(+) = [ADP-thiazole synthase]-dehydroalanine + ADP-5-ethyl-4-methylthiazole-2-carboxylate + nicotinamide + 3 H2O + 2 H(+). Functionally, involved in biosynthesis of the thiamine precursor thiazole. Catalyzes the conversion of NAD and glycine to adenosine diphosphate 5-(2-hydroxyethyl)-4-methylthiazole-2-carboxylic acid (ADT), an adenylated thiazole intermediate. The reaction includes an iron-dependent sulfide transfer from a conserved cysteine residue of the protein to a thiazole intermediate. The enzyme can only undergo a single turnover, which suggests it is a suicide enzyme. May have additional roles in adaptation to various stress conditions and in DNA damage tolerance. The sequence is that of Thiamine thiazole synthase from Yarrowia lipolytica (strain CLIB 122 / E 150) (Yeast).